Reading from the N-terminus, the 638-residue chain is Carbon monoxide dehydrogenase (638 aa).

Residues C46, C55, C58, C63, and C74 each coordinate [4Fe-4S] cluster. [Ni-4Fe-5S] cluster contacts are provided by H265, C299, C343, C452, C483, and C524.

The protein belongs to the Ni-containing carbon monoxide dehydrogenase family. In terms of assembly, homodimer. [4Fe-4S] cluster is required as a cofactor. The cofactor is [Ni-4Fe-5S] cluster.

It catalyses the reaction CO + 2 oxidized [2Fe-2S]-[ferredoxin] + H2O = 2 reduced [2Fe-2S]-[ferredoxin] + CO2 + 2 H(+). CODH oxidizes carbon monoxide coupled, via CooF, to the reduction of a hydrogen cation by a hydrogenase (possibly CooH). The polypeptide is Carbon monoxide dehydrogenase (cooS) (Methanopyrus kandleri (strain AV19 / DSM 6324 / JCM 9639 / NBRC 100938)).